We begin with the raw amino-acid sequence, 537 residues long: Glutamyl-tRNA reductase, chloroplastic (537 aa).

The N-terminal 48 residues, 1–48 (MMASTTSATAAGGAFAAAKTRAGSSAAGGGACARVAAGGRRRSGVVVR), are a transit peptide targeting the chloroplast. Residues 134–137 (TCNR), Ser-194, 199–201 (EGQ), and Gln-205 each bind substrate. Cys-135 acts as the Nucleophile in catalysis. Residue 276–281 (GAGKMG) participates in NADP(+) binding.

The protein belongs to the glutamyl-tRNA reductase family.

It localises to the plastid. It is found in the chloroplast. The enzyme catalyses (S)-4-amino-5-oxopentanoate + tRNA(Glu) + NADP(+) = L-glutamyl-tRNA(Glu) + NADPH + H(+). It functions in the pathway porphyrin-containing compound metabolism; protoporphyrin-IX biosynthesis; 5-aminolevulinate from L-glutamyl-tRNA(Glu): step 1/2. Its function is as follows. Catalyzes the NADPH-dependent reduction of glutamyl-tRNA(Glu) to glutamate 1-semialdehyde (GSA). The protein is Glutamyl-tRNA reductase, chloroplastic of Oryza sativa subsp. japonica (Rice).